Consider the following 204-residue polypeptide: UPF0637 protein SAB0972c (204 aa).

This sequence belongs to the UPF0637 family.

This is UPF0637 protein SAB0972c from Staphylococcus aureus (strain bovine RF122 / ET3-1).